Reading from the N-terminus, the 442-residue chain is UDP-N-acetylmuramoylalanine--D-glutamate ligase (442 aa).

Position 113-119 (113-119) interacts with ATP; it reads GSNGKTT.

The protein belongs to the MurCDEF family.

The protein resides in the cytoplasm. It catalyses the reaction UDP-N-acetyl-alpha-D-muramoyl-L-alanine + D-glutamate + ATP = UDP-N-acetyl-alpha-D-muramoyl-L-alanyl-D-glutamate + ADP + phosphate + H(+). The protein operates within cell wall biogenesis; peptidoglycan biosynthesis. Its function is as follows. Cell wall formation. Catalyzes the addition of glutamate to the nucleotide precursor UDP-N-acetylmuramoyl-L-alanine (UMA). The chain is UDP-N-acetylmuramoylalanine--D-glutamate ligase from Coxiella burnetii (strain CbuK_Q154) (Coxiella burnetii (strain Q154)).